We begin with the raw amino-acid sequence, 476 residues long: Aspartyl/glutamyl-tRNA(Asn/Gln) amidotransferase subunit B (476 aa).

Belongs to the GatB/GatE family. GatB subfamily. As to quaternary structure, heterotrimer of A, B and C subunits.

It catalyses the reaction L-glutamyl-tRNA(Gln) + L-glutamine + ATP + H2O = L-glutaminyl-tRNA(Gln) + L-glutamate + ADP + phosphate + H(+). It carries out the reaction L-aspartyl-tRNA(Asn) + L-glutamine + ATP + H2O = L-asparaginyl-tRNA(Asn) + L-glutamate + ADP + phosphate + 2 H(+). Functionally, allows the formation of correctly charged Asn-tRNA(Asn) or Gln-tRNA(Gln) through the transamidation of misacylated Asp-tRNA(Asn) or Glu-tRNA(Gln) in organisms which lack either or both of asparaginyl-tRNA or glutaminyl-tRNA synthetases. The reaction takes place in the presence of glutamine and ATP through an activated phospho-Asp-tRNA(Asn) or phospho-Glu-tRNA(Gln). This Solidesulfovibrio magneticus (strain ATCC 700980 / DSM 13731 / RS-1) (Desulfovibrio magneticus) protein is Aspartyl/glutamyl-tRNA(Asn/Gln) amidotransferase subunit B.